Reading from the N-terminus, the 210-residue chain is FMN-dependent NADH:quinone oxidoreductase 8 (210 aa).

FMN is bound by residues serine 10 and 16–18 (SIS).

It belongs to the azoreductase type 1 family. In terms of assembly, homodimer. The cofactor is FMN.

The enzyme catalyses 2 a quinone + NADH + H(+) = 2 a 1,4-benzosemiquinone + NAD(+). The catalysed reaction is N,N-dimethyl-1,4-phenylenediamine + anthranilate + 2 NAD(+) = 2-(4-dimethylaminophenyl)diazenylbenzoate + 2 NADH + 2 H(+). Quinone reductase that provides resistance to thiol-specific stress caused by electrophilic quinones. Its function is as follows. Also exhibits azoreductase activity. Catalyzes the reductive cleavage of the azo bond in aromatic azo compounds to the corresponding amines. This is FMN-dependent NADH:quinone oxidoreductase 8 from Burkholderia lata (strain ATCC 17760 / DSM 23089 / LMG 22485 / NCIMB 9086 / R18194 / 383).